Here is a 295-residue protein sequence, read N- to C-terminus: Ethanolamine ammonia-lyase small subunit (295 aa).

Positions 207, 228, and 258 each coordinate adenosylcob(III)alamin.

Belongs to the EutC family. As to quaternary structure, the basic unit is a heterodimer which dimerizes to form tetramers. The heterotetramers trimerize; 6 large subunits form a core ring with 6 small subunits projecting outwards. The cofactor is adenosylcob(III)alamin.

The protein resides in the bacterial microcompartment. It catalyses the reaction ethanolamine = acetaldehyde + NH4(+). It participates in amine and polyamine degradation; ethanolamine degradation. In terms of biological role, catalyzes the deamination of various vicinal amino-alcohols to oxo compounds. Allows this organism to utilize ethanolamine as the sole source of nitrogen and carbon in the presence of external vitamin B12. This chain is Ethanolamine ammonia-lyase small subunit, found in Escherichia coli O157:H7.